A 245-amino-acid polypeptide reads, in one-letter code: Carboxy-S-adenosyl-L-methionine synthase (245 aa).

Residues Tyr-42, 67 to 69, 92 to 93, 120 to 121, Asn-135, and Arg-202 each bind S-adenosyl-L-methionine; these read GCS, DN, and DI.

The protein belongs to the class I-like SAM-binding methyltransferase superfamily. Cx-SAM synthase family. Homodimer.

The enzyme catalyses prephenate + S-adenosyl-L-methionine = carboxy-S-adenosyl-L-methionine + 3-phenylpyruvate + H2O. Catalyzes the conversion of S-adenosyl-L-methionine (SAM) to carboxy-S-adenosyl-L-methionine (Cx-SAM). This chain is Carboxy-S-adenosyl-L-methionine synthase, found in Vibrio vulnificus (strain CMCP6).